Consider the following 636-residue polypeptide: ATP-dependent zinc metalloprotease FtsH 1 (636 aa).

Residues 1-18 (MKLSPPKKNLPPQKNNEP) lie on the Cytoplasmic side of the membrane. The helical transmembrane segment at 19–39 (PFPYLRLLVQVGIALFLVWIW) threads the bilayer. Over 40–126 (QESLHKATVS…YGSVKPSLLS (87 aa)) the chain is Periplasmic. Residues 127-147 (QILFSWVVPILIFFLVWFALA) form a helical membrane-spanning segment. At 148–636 (RFMGGGGAGY…KEAPSYSSTL (489 aa)) the chain is on the cytoplasmic side. 220–227 (GPPGTGKT) provides a ligand contact to ATP. His-442 contributes to the Zn(2+) binding site. Residue Glu-443 is part of the active site. Residues His-446 and Asp-519 each coordinate Zn(2+).

The protein in the central section; belongs to the AAA ATPase family. This sequence in the C-terminal section; belongs to the peptidase M41 family. In terms of assembly, homohexamer. The cofactor is Zn(2+).

It localises to the cell inner membrane. In terms of biological role, acts as a processive, ATP-dependent zinc metallopeptidase for both cytoplasmic and membrane proteins. Plays a role in the quality control of integral membrane proteins. This chain is ATP-dependent zinc metalloprotease FtsH 1, found in Methylacidiphilum infernorum (isolate V4) (Methylokorus infernorum (strain V4)).